We begin with the raw amino-acid sequence, 201 residues long: Proteasome subunit beta 1 (201 aa).

A propeptide spans M1–G10 (removed in mature form; by autocatalysis). T11 (nucleophile) is an active-site residue.

It belongs to the peptidase T1B family. The 20S proteasome core is composed of 14 alpha and 14 beta subunits that assemble into four stacked heptameric rings, resulting in a barrel-shaped structure. The two inner rings, each composed of seven catalytic beta subunits, are sandwiched by two outer rings, each composed of seven alpha subunits. The catalytic chamber with the active sites is on the inside of the barrel. Has a gated structure, the ends of the cylinder being occluded by the N-termini of the alpha-subunits. Is capped at one or both ends by the proteasome regulatory ATPase, PAN.

Its subcellular location is the cytoplasm. It catalyses the reaction Cleavage of peptide bonds with very broad specificity.. Its activity is regulated as follows. The formation of the proteasomal ATPase PAN-20S proteasome complex, via the docking of the C-termini of PAN into the intersubunit pockets in the alpha-rings, triggers opening of the gate for substrate entry. Interconversion between the open-gate and close-gate conformations leads to a dynamic regulation of the 20S proteasome proteolysis activity. In terms of biological role, component of the proteasome core, a large protease complex with broad specificity involved in protein degradation. The protein is Proteasome subunit beta 1 of Thermococcus gammatolerans (strain DSM 15229 / JCM 11827 / EJ3).